A 329-amino-acid polypeptide reads, in one-letter code: E3 ubiquitin-protein ligase SINA-like 4 (329 aa).

Over residues 1–12 (MTKLGRRNDGGG) the composition is skewed to basic and acidic residues. The interval 1-58 (MTKLGRRNDGGGKSHRSSTKRQRRTSVSVDDPSPGEEEEKTLVVLTDDSDSEEDDKPL) is disordered. Residues 13–24 (KSHRSSTKRQRR) show a composition bias toward basic residues. The segment at 86–122 (CPNCFDPLKKPIFQCNNGHLACFLCCIKLKKRCSFCK) adopts an RING-type; degenerate zinc-finger fold. The interval 136-325 (VIKAGLVSCS…MEISIGDKND (190 aa)) is SBD. Residues 139–198 (AGLVSCSNAIYGCKQSTTYGNQLQSHEKVCVFAPCSCPIKDCNYIGFYKDLINHFRATHK) form an SIAH-type zinc finger. Zn(2+) contacts are provided by C144, C151, H164, C168, C175, C180, H192, and H197.

Belongs to the SINA (Seven in absentia) family.

The catalysed reaction is S-ubiquitinyl-[E2 ubiquitin-conjugating enzyme]-L-cysteine + [acceptor protein]-L-lysine = [E2 ubiquitin-conjugating enzyme]-L-cysteine + N(6)-ubiquitinyl-[acceptor protein]-L-lysine.. The protein operates within protein modification; protein ubiquitination. Its function is as follows. E3 ubiquitin-protein ligase that mediates ubiquitination and subsequent proteasomal degradation of target proteins. E3 ubiquitin ligases accept ubiquitin from an E2 ubiquitin-conjugating enzyme in the form of a thioester and then directly transfers the ubiquitin to targeted substrates. It probably triggers the ubiquitin-mediated degradation of different substrates. This chain is E3 ubiquitin-protein ligase SINA-like 4, found in Arabidopsis thaliana (Mouse-ear cress).